Here is a 332-residue protein sequence, read N- to C-terminus: Abscisic acid-inducible protein kinase (332 aa).

ATP contacts are provided by residues 1–8 (GSGNFGVA) and Lys-23. Residues 1-250 (GSGNFGVAKL…IPEIKNHPWF (250 aa)) form the Protein kinase domain. Asp-113 functions as the Proton acceptor in the catalytic mechanism.

It belongs to the protein kinase superfamily. Ser/Thr protein kinase family. Autophosphorylated.

The enzyme catalyses L-seryl-[protein] + ATP = O-phospho-L-seryl-[protein] + ADP + H(+). It carries out the reaction L-threonyl-[protein] + ATP = O-phospho-L-threonyl-[protein] + ADP + H(+). In terms of biological role, involved in water-stress responses. The sequence is that of Abscisic acid-inducible protein kinase from Triticum aestivum (Wheat).